A 554-amino-acid chain; its full sequence is MFCIQCEQTIRTPAGNGCSYSQGMCGKLAATSDLQDLLIYMLQGVSVYAVKARELGIVDAEIDSFVPKAFFSTLTNVNFDDERIVAYAQQAAKYRASLKAAYELACERAGKVAEQVPEVAQLVLGTSKVEMLSQAPIALLNKDKHEIHEDILGLRLLCLYGLKGAAAYMEHARVLDQTDAEVAGRFHEIMAFLGESSVDGDKLFATAMEIGQLNYRIMAMLDAGETQSFGHPEPTVVNTKSVKGKAILVSGHDMKDLELILEQTVGKGINVYTHGEMLPALAYPAFKKYPHLVGNYGSAWQNQQKEFANFPGAVVMTSNCIIDPNVGSYSDRIFTRSIVGWPGVMHIIGDDFSAVIDKALALEGFNYDEIPHKITIGFARNALMAAAPAVVENVKNGSIKHFFLVGGCDGDKADRSYFTELAKSTPKDSIILTLGCGKYKFNKLEFGDINGIPRLLDVGQCNDAYSAIQLAIALAEVFECDINELPLSLVLSWFEQKAIVVLLTLLSLGVKNIRTGPTPPAFLTANLAKILEDKFGLRNTTTVEADLKTMLNVA.

[2Fe-2S] cluster is bound by residues C3, C6, C18, and C25. Hybrid [4Fe-2O-2S] cluster is bound by residues H252, E276, C320, C408, C436, C461, E495, and K497. C408 bears the Cysteine persulfide mark.

Belongs to the HCP family. It depends on [2Fe-2S] cluster as a cofactor. Requires hybrid [4Fe-2O-2S] cluster as cofactor.

It is found in the cytoplasm. It catalyses the reaction A + NH4(+) + H2O = hydroxylamine + AH2 + H(+). Functionally, catalyzes the reduction of hydroxylamine to form NH(3) and H(2)O. This chain is Hydroxylamine reductase, found in Shewanella putrefaciens (strain CN-32 / ATCC BAA-453).